A 112-amino-acid chain; its full sequence is Nucleoid-associated protein CPR_0056 (112 aa).

Positions Ala91–Gly100 are enriched in basic and acidic residues. A disordered region spans residues Ala91–Phe112. Residues Leu102–Phe112 are compositionally biased toward gly residues.

It belongs to the YbaB/EbfC family. In terms of assembly, homodimer.

Its subcellular location is the cytoplasm. The protein resides in the nucleoid. Its function is as follows. Binds to DNA and alters its conformation. May be involved in regulation of gene expression, nucleoid organization and DNA protection. The chain is Nucleoid-associated protein CPR_0056 from Clostridium perfringens (strain SM101 / Type A).